A 1019-amino-acid polypeptide reads, in one-letter code: Photoactivated adenylate cyclase subunit alpha (1019 aa).

The BLUF 1 domain maps to 55-148; sequence LRRLMYLSAS…GRMYGEWHMK (94 aa). Positions 204–332 constitute a Guanylate cyclase 1 domain; it reads VVTFIYLVEF…DCINTASRIT (129 aa). A BLUF 2 domain is found at 467-559; sequence LITLTYISQA…RVYGSPLDMT (93 aa). The 130-residue stretch at 615–744 folds into the Guanylate cyclase 2 domain; that stretch reads VMLATDICSF…EVSARVMEVE (130 aa). Positions 822–861 are disordered; the sequence is GTNAPGRGAPAGGIPSSPKVRPPGRTNSVSSYTPDPNEAL. A compositionally biased stretch (low complexity) spans 825 to 839; that stretch reads APGRGAPAGGIPSSP. Over residues 846-855 the composition is skewed to polar residues; that stretch reads RTNSVSSYTP.

Belongs to the adenylyl cyclase class-4/guanylyl cyclase family. Heterotetramer of two alpha and two beta subunits. FAD serves as cofactor.

It localises to the cell projection. The protein resides in the cilium. It is found in the flagellum. The enzyme catalyses ATP = 3',5'-cyclic AMP + diphosphate. With respect to regulation, activity increased by up to 80-fold under blue light. In terms of biological role, acts as a blue light photoreceptor for the step-up photophobic response. Mediates photoavoidance. The sequence is that of Photoactivated adenylate cyclase subunit alpha from Euglena gracilis.